Consider the following 137-residue polypeptide: Probable DNA-directed RNA polymerases I, II, and III subunit RPABC2 (137 aa).

Composition is skewed to acidic residues over residues 1–27 (MADE…VIEE) and 34–43 (NEDEDDDNVD). Residues 1–43 (MADEDDYQDMDNDDFVDDNEMEDVIEEDPQRPDNEDEDDDNVD) form a disordered region.

The protein belongs to the archaeal Rpo6/eukaryotic RPB6 RNA polymerase subunit family. In terms of assembly, component of the RNA polymerase I (Pol I), RNA polymerase II (Pol II) and RNA polymerase III (Pol III) complexes consisting of at least 13, 12 and 17 subunits, respectively.

The protein resides in the nucleus. Functionally, DNA-dependent RNA polymerases catalyze the transcription of DNA into RNA using the four ribonucleoside triphosphates as substrates. Common component of RNA polymerases I, II and III which synthesize ribosomal RNA precursors, mRNA precursors and many functional non-coding RNAs, and small RNAs, such as 5S rRNA and tRNAs, respectively. Pol II is the central component of the basal RNA polymerase II transcription machinery. Pols are composed of mobile elements that move relative to each other. In Pol II, RPB6 is part of the clamp element and together with parts of RPB1 and RPB2 forms a pocket to which the RPB4-RPB7 subcomplex binds. This is Probable DNA-directed RNA polymerases I, II, and III subunit RPABC2 (rpb-6) from Caenorhabditis elegans.